The primary structure comprises 210 residues: Probable GTP-binding protein EngB (210 aa).

In terms of domain architecture, EngB-type G spans 25–199 (TGIEVAFAGR…RQKLDTWFSE (175 aa)). Residues 33–40 (GRSNAGKS), 60–64 (GRTQL), 78–81 (DLPG), 145–148 (TKAD), and 178–180 (FSS) each bind GTP. Mg(2+) is bound by residues Ser-40 and Thr-62.

Belongs to the TRAFAC class TrmE-Era-EngA-EngB-Septin-like GTPase superfamily. EngB GTPase family. Mg(2+) serves as cofactor.

Necessary for normal cell division and for the maintenance of normal septation. The protein is Probable GTP-binding protein EngB of Escherichia coli O6:H1 (strain CFT073 / ATCC 700928 / UPEC).